A 93-amino-acid chain; its full sequence is Guanine nucleotide-binding protein subunit gamma 1 (93 aa).

Residues 12 to 52 adopt a coiled-coil conformation; the sequence is TRGRHRIQAELKKLEQEARFLEEELEELDKTDKVSAALQEL. Residues 20-93 enclose the G protein gamma domain; it reads AELKKLEQEA…DLRRCKCWFL (74 aa). The S-palmitoyl cysteine moiety is linked to residue C88. The residue at position 90 (C90) is a Cysteine methyl ester. C90 carries the S-farnesyl cysteine lipid modification. The propeptide at 91-93 is removed in mature form; the sequence is WFL.

G proteins are composed of 3 units, alpha, beta and gamma. Interacts with the beta subunit RGB1.

The protein localises to the cell membrane. Functionally, guanine nucleotide-binding proteins (G proteins) are involved as modulators or transducers in various transmembrane signaling systems. This Oryza sativa subsp. indica (Rice) protein is Guanine nucleotide-binding protein subunit gamma 1.